A 105-amino-acid polypeptide reads, in one-letter code: Secreted RxLR effector protein 158 (105 aa).

Positions 1-22 are cleaved as a signal peptide; the sequence is MRGAHYVAIVLLVAAGGQTAAG. Residues 50–71 carry the RxLR-dEER motif; that stretch reads RALQASRNPKDDLMFSAGDEER.

It belongs to the RxLR effector family.

It is found in the secreted. The protein localises to the host nucleus. The protein resides in the host cytoplasm. In terms of biological role, secreted effector that partially suppresses the host cell death induced by cell death-inducing proteins. The polypeptide is Secreted RxLR effector protein 158 (Plasmopara viticola (Downy mildew of grapevine)).